A 68-amino-acid chain; its full sequence is Large ribosomal subunit protein uL29 (68 aa).

It belongs to the universal ribosomal protein uL29 family.

The sequence is that of Large ribosomal subunit protein uL29 from Parvibaculum lavamentivorans (strain DS-1 / DSM 13023 / NCIMB 13966).